We begin with the raw amino-acid sequence, 426 residues long: 26S proteasome regulatory subunit 7 homolog A (426 aa).

209 to 216 (GPPGTGKT) provides a ligand contact to ATP. Glycyl lysine isopeptide (Lys-Gly) (interchain with G-Cter in ubiquitin) cross-links involve residues Lys400 and Lys415.

The protein belongs to the AAA ATPase family. As to quaternary structure, component of the 19S regulatory particle (RP/PA700) base subcomplex of the 26S proteasome. The 26S proteasome is composed of a core protease (CP), known as the 20S proteasome, capped at one or both ends by the 19S regulatory particle (RP/PA700). The RP/PA700 complex is composed of at least 17 different subunits in two subcomplexes, the base and the lid, which form the portions proximal and distal to the 20S proteolytic core, respectively.

It is found in the cytoplasm. Its subcellular location is the nucleus. Functionally, the 26S proteasome is involved in the ATP-dependent degradation of ubiquitinated proteins. The regulatory (or ATPase) complex confers ATP dependency and substrate specificity to the 26S complex. The chain is 26S proteasome regulatory subunit 7 homolog A (RPT1A) from Arabidopsis thaliana (Mouse-ear cress).